The sequence spans 88 residues: Monensin polyketide synthase acyl carrier protein (88 aa).

Positions 5–82 constitute a Carrier domain; sequence PFTLADLQRI…ELIDHVNERL (78 aa). The residue at position 42 (S42) is an O-(pantetheine 4'-phosphoryl)serine.

4'-phosphopantetheine is transferred from CoA to a specific serine of the apo-ACP-like protein.

It functions in the pathway antifungal biosynthesis; monensin biosynthesis. Its function is as follows. Acyl carrier protein. This chain is Monensin polyketide synthase acyl carrier protein, found in Streptomyces virginiae (Streptomyces cinnamonensis).